A 317-amino-acid chain; its full sequence is Transaldolase (317 aa).

Lys126 functions as the Schiff-base intermediate with substrate in the catalytic mechanism.

The protein belongs to the transaldolase family. Type 1 subfamily. Homodimer.

It is found in the cytoplasm. It catalyses the reaction D-sedoheptulose 7-phosphate + D-glyceraldehyde 3-phosphate = D-erythrose 4-phosphate + beta-D-fructose 6-phosphate. Its pathway is carbohydrate degradation; pentose phosphate pathway; D-glyceraldehyde 3-phosphate and beta-D-fructose 6-phosphate from D-ribose 5-phosphate and D-xylulose 5-phosphate (non-oxidative stage): step 2/3. Transaldolase is important for the balance of metabolites in the pentose-phosphate pathway. The protein is Transaldolase of Burkholderia vietnamiensis (strain G4 / LMG 22486) (Burkholderia cepacia (strain R1808)).